Consider the following 212-residue polypeptide: Thiamine-phosphate synthase (212 aa).

38–42 (QLREK) lines the 4-amino-2-methyl-5-(diphosphooxymethyl)pyrimidine pocket. Mg(2+) is bound by residues Asp-71 and Asp-90. Lys-138 is a binding site for 4-amino-2-methyl-5-(diphosphooxymethyl)pyrimidine. Gly-166 lines the 2-[(2R,5Z)-2-carboxy-4-methylthiazol-5(2H)-ylidene]ethyl phosphate pocket.

It belongs to the thiamine-phosphate synthase family. Mg(2+) serves as cofactor.

The catalysed reaction is 2-[(2R,5Z)-2-carboxy-4-methylthiazol-5(2H)-ylidene]ethyl phosphate + 4-amino-2-methyl-5-(diphosphooxymethyl)pyrimidine + 2 H(+) = thiamine phosphate + CO2 + diphosphate. It catalyses the reaction 2-(2-carboxy-4-methylthiazol-5-yl)ethyl phosphate + 4-amino-2-methyl-5-(diphosphooxymethyl)pyrimidine + 2 H(+) = thiamine phosphate + CO2 + diphosphate. It carries out the reaction 4-methyl-5-(2-phosphooxyethyl)-thiazole + 4-amino-2-methyl-5-(diphosphooxymethyl)pyrimidine + H(+) = thiamine phosphate + diphosphate. Its pathway is cofactor biosynthesis; thiamine diphosphate biosynthesis; thiamine phosphate from 4-amino-2-methyl-5-diphosphomethylpyrimidine and 4-methyl-5-(2-phosphoethyl)-thiazole: step 1/1. In terms of biological role, condenses 4-methyl-5-(beta-hydroxyethyl)thiazole monophosphate (THZ-P) and 2-methyl-4-amino-5-hydroxymethyl pyrimidine pyrophosphate (HMP-PP) to form thiamine monophosphate (TMP). In Chlamydia caviae (strain ATCC VR-813 / DSM 19441 / 03DC25 / GPIC) (Chlamydophila caviae), this protein is Thiamine-phosphate synthase.